The primary structure comprises 349 residues: MENIGTILRLAEDKILLVQNLKALQEYKVEFLGKNGIVTGELKKLGSLNEQERKEFGLKINKLKDKIQNIIKAKAEILEEQELNFKLAADKIDLTIPARRYKQGSIHPITQCSEELIQVFSQFGFTIENGPNIENDFHNFTALNFEDDHPARQMHDTFYLKSQENNKPLLLRTHTSTVQIRAMKNGKPPFRFIAPGRTYRSDSDMTHTPMFHQIEGLVMDKNINMGHLKYVITTFIKSFFENSNIELRFRPSFFPFTEPSAEVDIRMNKNDKWLEVLGCGMVHPNVLKNVGIDSSEYQGFAFGLGVERFAMLKYNIKDLRQFFEGDMRWLKHYNFGSFDIPNLAGGLTK.

Glu-258 lines the Mg(2+) pocket.

This sequence belongs to the class-II aminoacyl-tRNA synthetase family. Phe-tRNA synthetase alpha subunit type 1 subfamily. In terms of assembly, tetramer of two alpha and two beta subunits. Mg(2+) serves as cofactor.

Its subcellular location is the cytoplasm. The enzyme catalyses tRNA(Phe) + L-phenylalanine + ATP = L-phenylalanyl-tRNA(Phe) + AMP + diphosphate + H(+). The sequence is that of Phenylalanine--tRNA ligase alpha subunit from Rickettsia rickettsii (strain Sheila Smith).